We begin with the raw amino-acid sequence, 840 residues long: Anaphase-promoting complex subunit CDC16 (840 aa).

Disordered regions lie at residues 67–97 and 173–212; these read AARTQQSLPTDAQNDRLQQPWNRTNTATSPY and GVVRDEDNDEDVHNNGDAAANANNDRESKLGHNGPLTTTT. TPR repeat units follow at residues 229–260, 263–288, and 296–319; these read AIERLRLWRFDALMQHMYRTAEYIADKVYNIS, PDDAFWLGQVYYNNNQYVRAVELITR, and ILCRYLLGLSFVKLQRFDDALDVI. The tract at residues 329–350 is disordered; that stretch reads PSTTAANTMSNNGNNSNTSQPV. The segment covering 330–347 has biased composition (low complexity); the sequence is STTAANTMSNNGNNSNTS. 11 TPR repeats span residues 357–388, 393–416, 426–454, 464–492, 499–526, 531–560, 565–593, 600–628, 633–665, 671–703, and 708–737; these read MESSLCFLRGKIYFAQNNFNKARDAFREAILV, FEAFEMLLSKNLLTPQEEWDLFDS, KEIMKNLYKINLSKYINTEDITKSNEILA, DVVRSKVDICYTQCKFNECLELCETVLEN, ILPAYIGCLYELSNKNKLFLLSHRLAET, AITWFSVATYYMSLDRISEAQKYYSKSSIL, AAAWLGFAHTYALEGEQDQALTAYSTASR, LPKLFLGMQFMAMNSLNLAESYFVLAYDI, PLVLNEMGVMYFKKNEFVKAKKYLKKALEVVKD, RTTISIQLNLGHTYRKLNENEIAIKCFRCVLEK, and SEIHCSLGYLYLKTKKLQKAIDHLHKSLYL. The tract at residues 802–840 is disordered; the sequence is RTQKEIFDQNNKALRKGGHDSKTGSNNADDDFDADMELE. A compositionally biased stretch (acidic residues) spans 829–840; it reads ADDDFDADMELE.

It belongs to the APC6/CDC16 family. In terms of assembly, the APC/C is composed of at least 13 subunits that stay tightly associated throughout the cell cycle: APC1, APC2, APC4, APC5, APC9, APC11, CDC16, CDC23, CDC26, CDC27, DOC1, MND2 and SWM1. Interacts with AMA1. In terms of processing, phosphorylated by CDC28, which is required for the early mitotic activity of the APC/C in its CDC20-bound form.

The protein localises to the nucleus. The protein operates within protein modification; protein ubiquitination. Functionally, component of the anaphase promoting complex/cyclosome (APC/C), a cell cycle-regulated E3 ubiquitin-protein ligase complex that controls progression through mitosis and the G1 phase of the cell cycle. The APC/C is thought to confer substrate specificity and, in the presence of ubiquitin-conjugating E2 enzymes, it catalyzes the formation of protein-ubiquitin conjugates that are subsequently degraded by the 26S proteasome. In early mitosis, the APC/C is activated by CDC20 and targets securin PDS1, the B-type cyclin CLB5, and other anaphase inhibitory proteins for proteolysis, thereby triggering the separation of sister chromatids at the metaphase-to-anaphase transition. In late mitosis and in G1, degradation of CLB5 allows activation of the APC/C by CDH1, which is needed to destroy CDC20 and the B-type cyclin CLB2 to allow exit from mitosis and creating the low CDK state necessary for cytokinesis and for reforming prereplicative complexes in G1 prior to another round of replication. The chain is Anaphase-promoting complex subunit CDC16 (CDC16) from Saccharomyces cerevisiae (strain ATCC 204508 / S288c) (Baker's yeast).